A 106-amino-acid chain; its full sequence is L-rhamnose mutarotase (106 aa).

Residue tyrosine 20 participates in substrate binding. The active-site Proton donor is the histidine 24. Residues tyrosine 43 and 78–79 contribute to the substrate site; that span reads WW.

Belongs to the rhamnose mutarotase family. In terms of assembly, homodimer.

It localises to the cytoplasm. It catalyses the reaction alpha-L-rhamnose = beta-L-rhamnose. Its pathway is carbohydrate metabolism; L-rhamnose metabolism. In terms of biological role, involved in the anomeric conversion of L-rhamnose. This is L-rhamnose mutarotase from Brucella anthropi (strain ATCC 49188 / DSM 6882 / CCUG 24695 / JCM 21032 / LMG 3331 / NBRC 15819 / NCTC 12168 / Alc 37) (Ochrobactrum anthropi).